The primary structure comprises 148 residues: Lysozyme C (148 aa).

Residues 1 to 18 (MKAVIILGLVLLSVTVQG) form the signal peptide. The region spanning 19–148 (KIFERCELAR…VSQYVQGCGV (130 aa)) is the C-type lysozyme domain. 4 cysteine pairs are disulfide-bonded: C24–C146, C48–C134, C83–C99, and C95–C113. Active-site residues include E53 and D71.

Belongs to the glycosyl hydrolase 22 family. In terms of assembly, monomer.

It localises to the secreted. The enzyme catalyses Hydrolysis of (1-&gt;4)-beta-linkages between N-acetylmuramic acid and N-acetyl-D-glucosamine residues in a peptidoglycan and between N-acetyl-D-glucosamine residues in chitodextrins.. Lysozymes have primarily a bacteriolytic function; those in tissues and body fluids are associated with the monocyte-macrophage system and enhance the activity of immunoagents. In Macaca mulatta (Rhesus macaque), this protein is Lysozyme C (LYZ).